Consider the following 545-residue polypeptide: Putative transcription factor ecdB (545 aa).

The segment at residues 12–39 is a DNA-binding region (zn(2)-C6 fungal-type); sequence CDACRSRRVKCDGQRPSCMGCLSRGLDC. The disordered stretch occupies residues 79-99; it reads PPPVLLASARPSSNPLSSHED.

Its subcellular location is the nucleus. In Aspergillus rugulosus (Emericella rugulosa), this protein is Putative transcription factor ecdB.